The primary structure comprises 349 residues: Glycerol-3-phosphate dehydrogenase [NAD(+)], cytoplasmic (349 aa).

10–15 contacts NAD(+); the sequence is GSGNWG. Residue Lys-120 coordinates substrate. Ala-153 provides a ligand contact to NAD(+). The residue at position 154 (Ser-154) is a Phosphoserine. The Proton acceptor role is filled by Lys-204. An NAD(+)-binding site is contributed by Arg-269. 269–270 lines the substrate pocket; the sequence is RN. Lys-289 is modified (N6-succinyllysine). NAD(+)-binding residues include Lys-296 and Gln-298. Tyr-326 is subject to Phosphotyrosine.

This sequence belongs to the NAD-dependent glycerol-3-phosphate dehydrogenase family. As to quaternary structure, homodimer.

Its subcellular location is the cytoplasm. The catalysed reaction is sn-glycerol 3-phosphate + NAD(+) = dihydroxyacetone phosphate + NADH + H(+). Its function is as follows. Has glycerol-3-phosphate dehydrogenase activity. This is Glycerol-3-phosphate dehydrogenase [NAD(+)], cytoplasmic (GPD1) from Pongo abelii (Sumatran orangutan).